A 228-amino-acid polypeptide reads, in one-letter code: Cytochrome c oxidase subunit 2 (228 aa).

The Mitochondrial intermembrane portion of the chain corresponds to 1–14 (MANHSQLGFQDASS). Residues 15–45 (PIMEELVEFHDHALIVALAICSLVLYLLAHM) traverse the membrane as a helical segment. Over 46 to 58 (LMEKLSSNAVDAQ) the chain is Mitochondrial matrix. The chain crosses the membrane as a helical span at residues 59–86 (EVELIWTILPAIVLVLLALPSLQILYMM). Topologically, residues 87 to 228 (DEIDEPDLTL…EAWSSLLSSS (142 aa)) are mitochondrial intermembrane. 6 residues coordinate Cu cation: H160, C195, E197, C199, H203, and M206. A Mg(2+)-binding site is contributed by E197.

Belongs to the cytochrome c oxidase subunit 2 family. Component of the cytochrome c oxidase (complex IV, CIV), a multisubunit enzyme composed of 14 subunits. The complex is composed of a catalytic core of 3 subunits MT-CO1, MT-CO2 and MT-CO3, encoded in the mitochondrial DNA, and 11 supernumerary subunits COX4I, COX5A, COX5B, COX6A, COX6B, COX6C, COX7A, COX7B, COX7C, COX8 and NDUFA4, which are encoded in the nuclear genome. The complex exists as a monomer or a dimer and forms supercomplexes (SCs) in the inner mitochondrial membrane with NADH-ubiquinone oxidoreductase (complex I, CI) and ubiquinol-cytochrome c oxidoreductase (cytochrome b-c1 complex, complex III, CIII), resulting in different assemblies (supercomplex SCI(1)III(2)IV(1) and megacomplex MCI(2)III(2)IV(2)). Found in a complex with TMEM177, COA6, COX18, COX20, SCO1 and SCO2. Interacts with TMEM177 in a COX20-dependent manner. Interacts with COX20. Interacts with COX16. Requires Cu cation as cofactor.

It localises to the mitochondrion inner membrane. It carries out the reaction 4 Fe(II)-[cytochrome c] + O2 + 8 H(+)(in) = 4 Fe(III)-[cytochrome c] + 2 H2O + 4 H(+)(out). Component of the cytochrome c oxidase, the last enzyme in the mitochondrial electron transport chain which drives oxidative phosphorylation. The respiratory chain contains 3 multisubunit complexes succinate dehydrogenase (complex II, CII), ubiquinol-cytochrome c oxidoreductase (cytochrome b-c1 complex, complex III, CIII) and cytochrome c oxidase (complex IV, CIV), that cooperate to transfer electrons derived from NADH and succinate to molecular oxygen, creating an electrochemical gradient over the inner membrane that drives transmembrane transport and the ATP synthase. Cytochrome c oxidase is the component of the respiratory chain that catalyzes the reduction of oxygen to water. Electrons originating from reduced cytochrome c in the intermembrane space (IMS) are transferred via the dinuclear copper A center (CU(A)) of subunit 2 and heme A of subunit 1 to the active site in subunit 1, a binuclear center (BNC) formed by heme A3 and copper B (CU(B)). The BNC reduces molecular oxygen to 2 water molecules using 4 electrons from cytochrome c in the IMS and 4 protons from the mitochondrial matrix. The protein is Cytochrome c oxidase subunit 2 (MT-CO2) of Anas platyrhynchos (Mallard).